We begin with the raw amino-acid sequence, 325 residues long: Tetraacyldisaccharide 4'-kinase (325 aa).

53–60 (SVGGNGKT) is a binding site for ATP.

The protein belongs to the LpxK family.

It catalyses the reaction a lipid A disaccharide + ATP = a lipid IVA + ADP + H(+). Its pathway is glycolipid biosynthesis; lipid IV(A) biosynthesis; lipid IV(A) from (3R)-3-hydroxytetradecanoyl-[acyl-carrier-protein] and UDP-N-acetyl-alpha-D-glucosamine: step 6/6. In terms of biological role, transfers the gamma-phosphate of ATP to the 4'-position of a tetraacyldisaccharide 1-phosphate intermediate (termed DS-1-P) to form tetraacyldisaccharide 1,4'-bis-phosphate (lipid IVA). This is Tetraacyldisaccharide 4'-kinase from Actinobacillus succinogenes (strain ATCC 55618 / DSM 22257 / CCUG 43843 / 130Z).